The primary structure comprises 197 residues: Outer-membrane lipoprotein LolB (197 aa).

The first 20 residues, 1 to 20 (MNRSRRLALFCLGAPLLLQA), serve as a signal peptide directing secretion. The N-palmitoyl cysteine moiety is linked to residue C21. A lipid anchor (S-diacylglycerol cysteine) is attached at C21.

Belongs to the LolB family. As to quaternary structure, monomer.

It localises to the cell outer membrane. In terms of biological role, plays a critical role in the incorporation of lipoproteins in the outer membrane after they are released by the LolA protein. This is Outer-membrane lipoprotein LolB from Cupriavidus necator (strain ATCC 17699 / DSM 428 / KCTC 22496 / NCIMB 10442 / H16 / Stanier 337) (Ralstonia eutropha).